Reading from the N-terminus, the 506-residue chain is Cytochrome P450 monooxygenase BOA3 (506 aa).

A helical membrane pass occupies residues 15–35 (IYLWIGFVLVVLLAYPTYFAI). Position 451 (cysteine 451) interacts with heme.

Belongs to the cytochrome P450 family. Requires heme as cofactor.

The protein resides in the membrane. It participates in polyketide biosynthesis. Cytochrome P450 monooxygenase; part of the gene cluster A that mediates the biosynthesis of botcinic acid and its botcinin derivatives, acetate-derived polyketides that contribute to virulence when combined with the sesquiterpene botrydial. Botcinic acid and its derivatives have been shown to induce chlorosis and necrosis during host plant infection, but also have antifungal activities. Two polyketide synthases, BOA6 and BOA9, are involved in the biosynthesis of botcinins. BOA6 mediates the formation of the per-methylated tetraketide core by condensation of four units of malonyl-CoA with one unit of acetyl-CoA, which would be methylated in activated methylene groups to yield a bicyclic acid intermediate that could then either be converted to botrylactone derivatives or lose the starter acetate unit through a retro-Claisen type C-C bond cleavage to yield botcinin derivatives. The second polyketide synthase, BOA9, is probably required for the biosynthesis of the tetraketide side chain of botcinins. The methyltransferase (MT) domain within BOA6 is probably responsible for the incorporation of four methyl groups. The trans-enoyl reductase BOA5 might take over the enoyl reductase function of BOA6 that misses an ER domain. The monooxygenases BOA2, BOA3 and BOA4 might be involved in further hydroxylations at C4, C5 and C8, whereas BOA7, close to BOA9, could potentially be involved in the hydroxylation at C4 in the side chain of botcinins. This chain is Cytochrome P450 monooxygenase BOA3, found in Botryotinia fuckeliana (strain B05.10) (Noble rot fungus).